Consider the following 689-residue polypeptide: Glycine--tRNA ligase beta subunit (689 aa).

The protein belongs to the class-II aminoacyl-tRNA synthetase family. In terms of assembly, tetramer of two alpha and two beta subunits.

Its subcellular location is the cytoplasm. The catalysed reaction is tRNA(Gly) + glycine + ATP = glycyl-tRNA(Gly) + AMP + diphosphate. The chain is Glycine--tRNA ligase beta subunit from Shewanella baltica (strain OS185).